A 1368-amino-acid polypeptide reads, in one-letter code: Indole-3-acetaldehyde oxidase (1368 aa).

In terms of domain architecture, 2Fe-2S ferredoxin-type spans 19–108 (TSLVFAINGQ…GCSITTSDGL (90 aa)). [2Fe-2S] cluster contacts are provided by C60, C65, and C68. The FAD-binding PCMH-type domain maps to 246–427 (LHSRKYRWSS…LSLEIPSWHS (182 aa)).

It belongs to the xanthine dehydrogenase family. As to quaternary structure, aldehyde oxidases (AO) are homodimers and heterodimers of AO subunits. AO-alpha is an AAO1 homodimer; AO-beta is an AAO1-AAO2 heterodimer. [2Fe-2S] cluster is required as a cofactor. FAD serves as cofactor. It depends on Mo-molybdopterin as a cofactor. In terms of tissue distribution, predominantly expressed in roots, seedlings, mature siliques and seeds, and to lower extent in stems and rosettes. In seedlings, mostly expressed in lower part of hypocotyls and roots.

It localises to the cytoplasm. The catalysed reaction is indole-3-acetaldehyde + O2 + H2O = (indol-3-yl)acetate + H2O2 + H(+). Its activity is regulated as follows. Strongly inhibited by iodoacetate and potassium cyanide (KCN). Weakly inhibited by 2-mercaptoethanol, dithiothreitol (DTT), menadione, estradiol, 4'-(9-acridinylamino)methanesulfon-m-anisidine (mAMSA), allopurinol and tritonX-100. Not affected by p-chloromercuribenzoate. Functionally, in higher plants aldehyde oxidases (AO) appear to be homo- and heterodimeric assemblies of AO subunits with probably different physiological functions. AO-alpha may be involved in the biosynthesis of auxin, and in biosynthesis of abscisic acid (ABA) in seeds. In vitro, AO-alpha uses heptaldehyde, protocatechualdehyde, benzaldehyde, indole-3-aldehyde (IAld), indole-3-acetaldehyde (IAAld), cinnamaldehyde and citral as substrates; AO-beta uses IAAld, IAld and naphtaldehyde as substrates. This is Indole-3-acetaldehyde oxidase (AAO1) from Arabidopsis thaliana (Mouse-ear cress).